Here is a 162-residue protein sequence, read N- to C-terminus: NADH-quinone oxidoreductase subunit I (162 aa).

2 4Fe-4S ferredoxin-type domains span residues 53-83 (LRRY…IDSA) and 93-122 (TRYD…ETHI). The [4Fe-4S] cluster site is built by Cys63, Cys66, Cys69, Cys73, Cys102, Cys105, Cys108, and Cys112.

Belongs to the complex I 23 kDa subunit family. As to quaternary structure, NDH-1 is composed of 14 different subunits. Subunits NuoA, H, J, K, L, M, N constitute the membrane sector of the complex. Requires [4Fe-4S] cluster as cofactor.

The protein localises to the cell inner membrane. The catalysed reaction is a quinone + NADH + 5 H(+)(in) = a quinol + NAD(+) + 4 H(+)(out). Functionally, NDH-1 shuttles electrons from NADH, via FMN and iron-sulfur (Fe-S) centers, to quinones in the respiratory chain. The immediate electron acceptor for the enzyme in this species is believed to be ubiquinone. Couples the redox reaction to proton translocation (for every two electrons transferred, four hydrogen ions are translocated across the cytoplasmic membrane), and thus conserves the redox energy in a proton gradient. The polypeptide is NADH-quinone oxidoreductase subunit I (Xanthomonas axonopodis pv. citri (strain 306)).